Here is a 327-residue protein sequence, read N- to C-terminus: Olfactory receptor 226 (327 aa).

At 1–26 (MERRNHSGRVSEFVLLGFPAPAPLRV) the chain is on the extracellular side. The N-linked (GlcNAc...) asparagine glycan is linked to Asn-5. A helical transmembrane segment spans residues 27-50 (LLFFLSLLAYVLVLTENMLIIIAI). At 51–58 (RNHPTLHK) the chain is on the cytoplasmic side. The helical transmembrane segment at 59-80 (PMYFFLANMSFLEIWYVTVTIP) threads the bilayer. Residues 81–104 (KMLAGFIGSKENHGQLISFEACMT) lie on the Extracellular side of the membrane. A disulfide bond links Cys-102 and Cys-194. Residues 105–125 (QLYFFLGLGCTECVLLAVMAY) form a helical membrane-spanning segment. The Cytoplasmic portion of the chain corresponds to 126-144 (DRYVAICHPLHYPVIVSSR). The chain crosses the membrane as a helical span at residues 145–163 (LCVQMAAGSWAGGFGISMV). Over 164–201 (KVFLISRLSYCGPNTINHFFCDVSPLLNLSCTDMSTAE) the chain is Extracellular. A helical membrane pass occupies residues 202 to 224 (LTDFVLAIFILLGPLSVTGASYM). Topologically, residues 225–241 (AITGAVMRIPSAAGRHK) are cytoplasmic. A helical transmembrane segment spans residues 242-265 (AFSTCASHLTVVIIFYAASIFIYA). The Extracellular portion of the chain corresponds to 266–277 (RPKALSAFDTNK). A helical membrane pass occupies residues 278-297 (LVSVLYAVIVPLFNPIIYCL). Residues 298–327 (RNQDVKRALRRTLHLAQDQEANTNKGSKNG) lie on the Cytoplasmic side of the membrane.

The protein belongs to the G-protein coupled receptor 1 family. As to expression, olfactory epithelium.

It localises to the cell membrane. Odorant receptor. The chain is Olfactory receptor 226 (Olr226) from Rattus norvegicus (Rat).